Here is a 505-residue protein sequence, read N- to C-terminus: Transcription factor APG (505 aa).

Disordered regions lie at residues 1-40 (MLRGNDTGSDLAELLWDNGAPAPLRPPPPPPFQPFTCSAA), 61-99 (GAANHHHHDDDDDDDDDVPWLHYHPVVDDDDDADADTAP), 119-156 (PAAAASRVDPDPCSSSHGAVVPSTSAAAAKQARTSGGG), 169-242 (PLQQ…APTT), 256-312 (AQRL…SQDE), 324-344 (RRSAARSSKRSRTAEVHNLSE), and 469-505 (PPPPPPPFPHAAATAVEQTPSPPGAADAGNAPAVKQA). Pro residues predominate over residues 23 to 33 (PLRPPPPPPFQ). Positions 131–144 (CSSSHGAVVPSTSA) are enriched in polar residues. Over residues 174–199 (PSGGETASASASAAATSTVPVESTVV) the composition is skewed to low complexity. The segment covering 200 to 212 (QAATNRLRSTPLF) has biased composition (polar residues). Residues 222-239 (PPKPSPRAAAPPPPPPLA) show a composition bias toward pro residues. The segment covering 288-299 (GDRRQLNWRDSH) has biased composition (basic and acidic residues). Positions 300-310 (NNQSAEWSASQ) are enriched in polar residues. Over residues 324 to 334 (RRSAARSSKRS) the composition is skewed to basic residues. Over residues 335-344 (RTAEVHNLSE) the composition is skewed to basic and acidic residues. The region spanning 335-384 (RTAEVHNLSERRRRDRINEKMRALQELIPNCNKIDKASMLEEAIEYLKTL) is the bHLH domain. Over residues 492 to 505 (GAADAGNAPAVKQA) the composition is skewed to low complexity.

The protein belongs to the bHLH protein family. In terms of assembly, homodimer and heterodimer with ILI5 or ILI6.

The protein localises to the nucleus. Its function is as follows. Atypical bHLH transcription factor that acts as a negative regulator of grain size. Binds the transcription factor ILI6 and forms a heterodimer of antagonistic bHLH transcription factors that regulates grain length and weight by controlling cell elongation in lemma and palea. May be involved in the control of lamina inclination through brassinosteroid signaling pathway. The chain is Transcription factor APG (APG) from Oryza sativa subsp. japonica (Rice).